The following is a 194-amino-acid chain: MPRLILASTSPWRRALLEKLTIPFECAAPDVDETPMPGEAPRQLVLRLAQAKAQSLAARFPNHLIIGSDQICVLDGEITGKPLTEEKARQQLAKASGSIVTFYTGLALYNSASGHLQTEVEPFDVHFRHLSEAEIDDYVRKEHPLHCAGSFKSEGLGIALFERLEGRDPNTLIGLPLIALCQMLRREEMNPLNA.

The Proton acceptor role is filled by aspartate 69.

The protein belongs to the Maf family. YceF subfamily. A divalent metal cation serves as cofactor.

Its subcellular location is the cytoplasm. It catalyses the reaction N(7)-methyl-GTP + H2O = N(7)-methyl-GMP + diphosphate + H(+). Its function is as follows. Nucleoside triphosphate pyrophosphatase that hydrolyzes 7-methyl-GTP (m(7)GTP). May have a dual role in cell division arrest and in preventing the incorporation of modified nucleotides into cellular nucleic acids. The sequence is that of 7-methyl-GTP pyrophosphatase (yceF) from Salmonella typhi.